Consider the following 340-residue polypeptide: Probable ribonucleoside hydrolase (340 aa).

A Ca(2+)-binding site is contributed by aspartate 14. Aspartate 18 is a substrate binding site. Ca(2+) is bound by residues aspartate 19 and threonine 139. 3 residues coordinate substrate: asparagine 172, glutamate 178, and asparagine 180. Histidine 259 functions as the Proton donor in the catalytic mechanism. Aspartate 260 contributes to the Ca(2+) binding site.

The protein belongs to the IUNH family. Ca(2+) is required as a cofactor.

It catalyses the reaction a purine D-ribonucleoside + H2O = a purine nucleobase + D-ribose. The catalysed reaction is a pyrimidine ribonucleoside + H2O = a pyrimidine nucleobase + D-ribose. The protein operates within purine metabolism; purine nucleoside salvage. In terms of biological role, catalyzes the hydrolysis of the N-glycosidic bond of purine and/or pyrimidine nucleosides into ribose and the base. The protein is Probable ribonucleoside hydrolase (iunH) of Dictyostelium discoideum (Social amoeba).